The chain runs to 194 residues: Outer surface 22 kDa lipoprotein (194 aa).

The N-terminal stretch at 1-21 (MYKNGFFKNYLSLLLIFLVIA) is a signal peptide. C22 carries N-palmitoyl cysteine lipidation. The S-diacylglycerol cysteine moiety is linked to residue C22.

Its subcellular location is the cell outer membrane. The polypeptide is Outer surface 22 kDa lipoprotein (p22) (Borreliella burgdorferi (strain N40) (Borrelia burgdorferi)).